The primary structure comprises 515 residues: ATP synthase subunit alpha (515 aa).

An ATP-binding site is contributed by G171–T178.

Belongs to the ATPase alpha/beta chains family. In terms of assembly, F-type ATPases have 2 components, CF(1) - the catalytic core - and CF(0) - the membrane proton channel. CF(1) has five subunits: alpha(3), beta(3), gamma(1), delta(1), epsilon(1). CF(0) has three main subunits: a(1), b(2) and c(9-12). The alpha and beta chains form an alternating ring which encloses part of the gamma chain. CF(1) is attached to CF(0) by a central stalk formed by the gamma and epsilon chains, while a peripheral stalk is formed by the delta and b chains.

It localises to the cell inner membrane. It carries out the reaction ATP + H2O + 4 H(+)(in) = ADP + phosphate + 5 H(+)(out). Functionally, produces ATP from ADP in the presence of a proton gradient across the membrane. The alpha chain is a regulatory subunit. This is ATP synthase subunit alpha from Xanthomonas oryzae pv. oryzae (strain MAFF 311018).